A 318-amino-acid chain; its full sequence is MKSLNIIFAGTPDFAARHLQALLNSQHNVIGVYTQPDRPAGRGKKLTASPVKELAVANNIPVYQPGSLRKEPAQQALAALNADIMVVVAYGLILPKVVLDTPRLGCINVHGSILPRWRGAAPIQRALWAGDKETGVTVMQMDVGLDTGDMLLKTYLPIEDSDTSASLYEKLAEQGPVALLQALKGLANGTLAAEKQDEALANYAEKLSKEEARLDWNKSAKQLWQEVRAFNPWPVSYFEHQGNTIKVWQAHVSETISTAAPGTIISASKRGIEVATADGVLTLLSMQLPGKKPLNVADILNARGEWFSPNTRLANEAE.

(6S)-5,6,7,8-tetrahydrofolate is bound at residue 112-115; the sequence is SILP.

Belongs to the Fmt family.

It carries out the reaction L-methionyl-tRNA(fMet) + (6R)-10-formyltetrahydrofolate = N-formyl-L-methionyl-tRNA(fMet) + (6S)-5,6,7,8-tetrahydrofolate + H(+). In terms of biological role, attaches a formyl group to the free amino group of methionyl-tRNA(fMet). The formyl group appears to play a dual role in the initiator identity of N-formylmethionyl-tRNA by promoting its recognition by IF2 and preventing the misappropriation of this tRNA by the elongation apparatus. In Shewanella sp. (strain W3-18-1), this protein is Methionyl-tRNA formyltransferase.